A 384-amino-acid polypeptide reads, in one-letter code: Galactokinase (384 aa).

A substrate-binding site is contributed by 35–38 (EHTD). ATP is bound by residues serine 69 and 125 to 131 (GAGLSSS). Residues serine 131 and glutamate 163 each coordinate Mg(2+). Residue aspartate 175 is the Proton acceptor of the active site. A substrate-binding site is contributed by tyrosine 224.

It belongs to the GHMP kinase family. GalK subfamily.

It localises to the cytoplasm. It catalyses the reaction alpha-D-galactose + ATP = alpha-D-galactose 1-phosphate + ADP + H(+). It functions in the pathway carbohydrate metabolism; galactose metabolism. Its function is as follows. Catalyzes the transfer of the gamma-phosphate of ATP to D-galactose to form alpha-D-galactose-1-phosphate (Gal-1-P). This is Galactokinase from Aliivibrio fischeri (strain ATCC 700601 / ES114) (Vibrio fischeri).